A 1170-amino-acid polypeptide reads, in one-letter code: Disease resistance protein LAZ5 (1170 aa).

The region spanning 10–172 is the TIR domain; it reads ESWQVFINFR…KIIDSIKKVL (163 aa). Residue glutamate 84 is part of the active site. The tract at residues 193 to 219 is disordered; sequence EAKNVDTFSPNSSDFPSTSIDDDLSIN. Over residues 198-219 the composition is skewed to polar residues; it reads DTFSPNSSDFPSTSIDDDLSIN. In terms of domain architecture, NB-ARC spans 261-513; sequence RLKEMEEKLD…DVACFFKSEN (253 aa). LRR repeat units lie at residues 595-616, 622-645, 646-670, 677-700, 723-747, 761-785, 790-813, 815-837, 838-861, 862-885, 888-904, and 905-930; these read MENVRGIFLDMSKVPEEMTFDG, MCNLRYLKIYSSVCHKEGEGIFKF, DTVREIQLPLDKVRYLHWMKYPWEK, PENLVDLELPYSSIKKVWEGVKDT, AKNLERLNLEGCTSLLKLPQEMENM, LTCLQSIKVSSLKILILSDCSKLEE, SENLEELYLDGTAIKGLPPAAGDL, RLVVLNMEGCTELESLPKRLGKQ, KALQELVLSGCSKLESVPTDVKDM, KHLRLLLLDGTRIRKIPKIKSLKC, LSRNIAMVNLQDNLKDF, and SNLKCLVMKNCENLRYLPSLPKCLEY.

The enzyme catalyses NAD(+) + H2O = ADP-D-ribose + nicotinamide + H(+). Its function is as follows. TIR-NB-LRR receptor-like protein that may play a role in plant innate immunity. May trigger hypersensitive programmed cell death in response to pathogen attack. Involved in tolerance to tobacco ringspot virus (TRSV). This chain is Disease resistance protein LAZ5, found in Arabidopsis thaliana (Mouse-ear cress).